Reading from the N-terminus, the 33-residue chain is Beta-amanitin proprotein (33 aa).

A propeptide spanning residues 1–10 (MSDINATRLP) is cleaved from the precursor. The segment at residues 11–18 (IWGIGCDP) is a cross-link (cyclopeptide (Ile-Pro)). Positions 12–16 (WGIGC) form a cross-link, 2'-cysteinyl-6'-hydroxytryptophan sulfoxide (Trp-Cys). The propeptide occupies 19–33 (CVGDDVAALTTRGEA).

The protein belongs to the MSDIN fungal toxin family. Processed by the macrocyclase-peptidase enzyme POPB to yield a toxic cyclic decapeptide. POPB first removes 10 residues from the N-terminus. Conformational trapping of the remaining peptide forces the enzyme to release this intermediate rather than proceed to macrocyclization. The enzyme rebinds the remaining peptide in a different conformation and catalyzes macrocyclization of the N-terminal 8 residues.

Toxin belonging to the bicyclic octapeptides amatoxins that acts by binding non-competitively to RNA polymerase II and greatly slowing the elongation of transcripts from target promoters. The chain is Beta-amanitin proprotein from Amanita rimosa.